A 137-amino-acid chain; its full sequence is Small ribosomal subunit protein uS12 (137 aa).

Asp89 is modified (3-methylthioaspartic acid). The interval 101–137 is disordered; the sequence is SLDTSGVADRKQSRSKYGAKQPKAGAPAAPVKGKGKK. Residues 116–137 show a composition bias toward low complexity; that stretch reads KYGAKQPKAGAPAAPVKGKGKK.

Belongs to the universal ribosomal protein uS12 family. In terms of assembly, part of the 30S ribosomal subunit. Contacts proteins S8 and S17. May interact with IF1 in the 30S initiation complex.

Functionally, with S4 and S5 plays an important role in translational accuracy. In terms of biological role, interacts with and stabilizes bases of the 16S rRNA that are involved in tRNA selection in the A site and with the mRNA backbone. Located at the interface of the 30S and 50S subunits, it traverses the body of the 30S subunit contacting proteins on the other side and probably holding the rRNA structure together. The combined cluster of proteins S8, S12 and S17 appears to hold together the shoulder and platform of the 30S subunit. The chain is Small ribosomal subunit protein uS12 from Chlorobium chlorochromatii (strain CaD3).